The following is a 597-amino-acid chain: Elongation factor 4 (597 aa).

In terms of domain architecture, tr-type G spans 2–184 (DHIRNFSIIA…ALVAKVPPPK (183 aa)). Residues 14-19 (DHGKST) and 131-134 (NKID) each bind GTP.

It belongs to the TRAFAC class translation factor GTPase superfamily. Classic translation factor GTPase family. LepA subfamily.

It is found in the cell inner membrane. It catalyses the reaction GTP + H2O = GDP + phosphate + H(+). In terms of biological role, required for accurate and efficient protein synthesis under certain stress conditions. May act as a fidelity factor of the translation reaction, by catalyzing a one-codon backward translocation of tRNAs on improperly translocated ribosomes. Back-translocation proceeds from a post-translocation (POST) complex to a pre-translocation (PRE) complex, thus giving elongation factor G a second chance to translocate the tRNAs correctly. Binds to ribosomes in a GTP-dependent manner. This chain is Elongation factor 4, found in Paraburkholderia xenovorans (strain LB400).